Consider the following 412-residue polypeptide: Protein trichome birefringence-like 13 (412 aa).

Residues 9–29 (PSLFPLLSLLCFISIFLLLSL) form a helical; Signal-anchor for type II membrane protein membrane-spanning segment. Residues 137 to 139 (GDS) carry the GDS motif motif. The short motif at 385 to 399 (DCMHWCLPGLTDTWN) is the DCXHWCLPGXXDXWN motif element.

Belongs to the PC-esterase family. TBL subfamily.

The protein resides in the membrane. Functionally, may act as a bridging protein that binds pectin and other cell wall polysaccharides. Probably involved in maintaining esterification of pectins. May be involved in the specific O-acetylation of cell wall polymers. In Arabidopsis thaliana (Mouse-ear cress), this protein is Protein trichome birefringence-like 13 (TBL13).